A 210-amino-acid chain; its full sequence is Ribosomal RNA large subunit methyltransferase E (210 aa).

Residues Gly-64, Trp-66, Asp-84, Asp-100, and Asp-125 each coordinate S-adenosyl-L-methionine. The active-site Proton acceptor is the Lys-165.

Belongs to the class I-like SAM-binding methyltransferase superfamily. RNA methyltransferase RlmE family.

Its subcellular location is the cytoplasm. It carries out the reaction uridine(2552) in 23S rRNA + S-adenosyl-L-methionine = 2'-O-methyluridine(2552) in 23S rRNA + S-adenosyl-L-homocysteine + H(+). In terms of biological role, specifically methylates the uridine in position 2552 of 23S rRNA at the 2'-O position of the ribose in the fully assembled 50S ribosomal subunit. The protein is Ribosomal RNA large subunit methyltransferase E of Chromohalobacter salexigens (strain ATCC BAA-138 / DSM 3043 / CIP 106854 / NCIMB 13768 / 1H11).